The chain runs to 1267 residues: BOS complex subunit NOMO2 (1267 aa).

Residues 1–31 (MLVGQGAGLLGPAVVTAAVVLLLSGVGPAHG) form the signal peptide. Residues 32–1155 (SEDIVVGCGG…NPTRKLPEQD (1124 aa)) lie on the Lumenal side of the membrane. N-linked (GlcNAc...) asparagine glycans are attached at residues N50, N218, and N618. The chain crosses the membrane as a helical span at residues 1156–1176 (IAQGSYIALPLTLLVLLAGYN). Residues 1177–1267 (HDKLIPLLLQ…LETTATCIHY (91 aa)) lie on the Cytoplasmic side of the membrane. The tract at residues 1198 to 1219 (GQAASDNSGPEDAKRQAKKQKT) is disordered.

As to quaternary structure, component of the back of Sec61 (BOS) complex, composed of NCLN/Nicalin, NOMO (NOMO1, NOMO2 or NOMO3) and TMEM147. The BOS complex is part of the multi-pass translocon (MPT) complex, composed of three subcomplexes, the GEL complex (composed of RAB5IF/OPTI and TMCO1), the BOS complex (composed of NCLN/Nicalin, NOMO and TMEM147) and the PAT complex (composed of WDR83OS/Asterix and CCDC47). The MPT complex associates with the SEC61 complex. Due to the strong similarity between NOMO1, NOMO2 and NOMO3, similar interaction pattern probably occur for the three gene copies. In terms of tissue distribution, highly expressed in pancreas and skeletal muscle and, at lower levels, in heart.

It is found in the endoplasmic reticulum membrane. In terms of biological role, component of the multi-pass translocon (MPT) complex that mediates insertion of multi-pass membrane proteins into the lipid bilayer of membranes. The MPT complex takes over after the SEC61 complex: following membrane insertion of the first few transmembrane segments of proteins by the SEC61 complex, the MPT complex occludes the lateral gate of the SEC61 complex to promote insertion of subsequent transmembrane regions. This chain is BOS complex subunit NOMO2 (NOMO2), found in Homo sapiens (Human).